A 166-amino-acid polypeptide reads, in one-letter code: Ribosome maturation factor RimM (166 aa).

The 73-residue stretch at 92–164 (EGVYYDFQLI…KIIIDPIPGL (73 aa)) folds into the PRC barrel domain.

The protein belongs to the RimM family. In terms of assembly, binds ribosomal protein uS19.

The protein localises to the cytoplasm. In terms of biological role, an accessory protein needed during the final step in the assembly of 30S ribosomal subunit, possibly for assembly of the head region. Essential for efficient processing of 16S rRNA. May be needed both before and after RbfA during the maturation of 16S rRNA. It has affinity for free ribosomal 30S subunits but not for 70S ribosomes. This chain is Ribosome maturation factor RimM, found in Dehalococcoides mccartyi (strain CBDB1).